The sequence spans 413 residues: Divalent metal cation transporter MntH (413 aa).

The next 11 helical transmembrane spans lie at 19–39 (LALM…GNFA), 46–66 (ASFG…AMLI), 94–114 (VWFY…AEFI), 122–142 (LVLG…TFLI), 156–176 (VIGG…IFSQ), 196–216 (AVFL…IYLH), 241–261 (IAMT…AAAF), 290–310 (IFGL…TLAG), 329–349 (AVTM…TRIL), 350–370 (VMSQ…LLIF), and 392–412 (VIVA…LLGV).

It belongs to the NRAMP family.

It is found in the cell inner membrane. Functionally, h(+)-stimulated, divalent metal cation uptake system. In Klebsiella pneumoniae (strain 342), this protein is Divalent metal cation transporter MntH.